A 709-amino-acid chain; its full sequence is MKKNKGLNEATTSEKPQFPKRTAWKIFWWVVILAIIIGILVYILMPRATTAVIEKWELSGTTLSAQIKGLSGKHTFQRINNSTYVTDDILQVSISFQGINPIVVTAHKATNGSGETIFNIANLSINQSTGKAIVNGMMTQDQKSNNGTELASIKGLHDIGTFVAPDTRARDVLNIFFGLLPIIIFVIFFLLFWRSARGISGGGRSEEDNIFSIGKTQAKLAKSSVRFDNIAGLQEEKHELLEIVDYLKNPLKYAQMGARSPRGVILYGPPGTGKTLLAKAVAGEAGVPFFQSTGSGFEDMLVGVGAKRVRDLFNKAKKAAPCIIFIDEIDSVGSKRGRVELSSYSVVEQTLNQLLAEMDGFTSRTGVVVMAATNRLDVLDDALLRPGRFDRHIQINLPDIKEREGILQVHAKNKNLSSKISLLDVAKRTPGFSGAQLENVINEATLLAVRDNRTTINMNDIDEAIDRVIAGPAKKSRVVSDADRKLVAYHEAGHALVGLHVHSNDEVQKITIIPRGQAGGYTLSTPKSGDLNLKRKSDLLAMIATAMGGRAAEEEIYGPLEITTGASSDFYKATNIARAMVTQLGMSKLGQVQYVPSQGTVPPGTKLFSEQTAKDIDFEINAIIEEQYKKARTIIKTNRKELELLVEALLIAETILKSDIDYIHEHTKLPPEILAQKQEQQAKQKAEAKEAKLNKKTEKDTEKDSETNS.

The Cytoplasmic portion of the chain corresponds to 1-25 (MKKNKGLNEATTSEKPQFPKRTAWK). Residues 26-46 (IFWWVVILAIIIGILVYILMP) form a helical membrane-spanning segment. Residues 47–171 (RATTAVIEKW…FVAPDTRARD (125 aa)) are Extracellular-facing. The chain crosses the membrane as a helical span at residues 172–192 (VLNIFFGLLPIIIFVIFFLLF). The Cytoplasmic portion of the chain corresponds to 193 to 709 (WRSARGISGG…DTEKDSETNS (517 aa)). An ATP-binding site is contributed by 268–275 (GPPGTGKT). A Zn(2+)-binding site is contributed by H490. The active site involves E491. Zn(2+) contacts are provided by H494 and D569. Residues 673 to 709 (ILAQKQEQQAKQKAEAKEAKLNKKTEKDTEKDSETNS) are disordered. Basic and acidic residues predominate over residues 680-709 (QQAKQKAEAKEAKLNKKTEKDTEKDSETNS).

This sequence in the central section; belongs to the AAA ATPase family. The protein in the C-terminal section; belongs to the peptidase M41 family. Homohexamer. The cofactor is Zn(2+).

Its subcellular location is the cell membrane. Its function is as follows. Acts as a processive, ATP-dependent zinc metallopeptidase for both cytoplasmic and membrane proteins. Plays a role in the quality control of integral membrane proteins. The protein is ATP-dependent zinc metalloprotease FtsH of Mycoplasma pneumoniae (strain ATCC 29342 / M129 / Subtype 1) (Mycoplasmoides pneumoniae).